The primary structure comprises 206 residues: CMP-5'-(N-acetyl-N-hydroxy-3-aminopropyl)phosphonate hydrolase (206 aa).

The Nudix hydrolase domain maps to 37–166 (VRAPGAAIIV…RTVTSGTAIG (130 aa)). Positions 74 to 95 (GLVDDREDPAVTAAREAEEETG) match the Nudix box motif. Residues 177-194 (RQQPGGVQEQPGGAQQQG) are compositionally biased toward low complexity. Residues 177 to 206 (RQQPGGVQEQPGGAQQQGMNESHSGRTVRG) form a disordered region.

It belongs to the Nudix hydrolase family. The cofactor is Mg(2+).

It carries out the reaction CMP-5'-(N-acetyl-N-hydroxy-3-aminopropyl)phosphonate + H2O = 3-(N-acetyl-N-hydroxy)aminopropylphosphonate + CMP + H(+). It functions in the pathway antibiotic biosynthesis. Its function is as follows. Nucleotide hydrolase involved in the biosynthesis of the phosphonate antibiotic FR-900098, a potent antimalarial agent that acts as an inhibitor of 1-deoxy-D-xylulose 5-phosphate reductoisomerase (DXR), the first enzyme in the nonmevalonate pathway for isoprenoid biosynthesis. Catalyzes the hydrolysis of CMP-5'-(N-acetyl-N-hydroxy-3-aminopropyl)phosphonate (CMP-5'-FR-900098) to produce CMP and the final compound FR-900098. In vitro, has broad substrate specificity and also catalyzes the hydrolysis of all the other CMP-containing intermediates within the pathway and shows low activity toward CTP. In Streptomyces rubellomurinus (strain ATCC 31215), this protein is CMP-5'-(N-acetyl-N-hydroxy-3-aminopropyl)phosphonate hydrolase.